The following is a 432-amino-acid chain: Gamma-glutamyl phosphate reductase (432 aa).

This sequence belongs to the gamma-glutamyl phosphate reductase family.

It localises to the cytoplasm. The catalysed reaction is L-glutamate 5-semialdehyde + phosphate + NADP(+) = L-glutamyl 5-phosphate + NADPH + H(+). It functions in the pathway amino-acid biosynthesis; L-proline biosynthesis; L-glutamate 5-semialdehyde from L-glutamate: step 2/2. Catalyzes the NADPH-dependent reduction of L-glutamate 5-phosphate into L-glutamate 5-semialdehyde and phosphate. The product spontaneously undergoes cyclization to form 1-pyrroline-5-carboxylate. This chain is Gamma-glutamyl phosphate reductase, found in Clavibacter michiganensis subsp. michiganensis (strain NCPPB 382).